Consider the following 424-residue polypeptide: Kynureninase (424 aa).

Pyridoxal 5'-phosphate contacts are provided by residues Leu-106, Thr-107, 134 to 137, Asp-219, His-222, and Tyr-244; that span reads FPSD. Residue Lys-245 is modified to N6-(pyridoxal phosphate)lysine. Residues Trp-274 and Asn-302 each contribute to the pyridoxal 5'-phosphate site.

Belongs to the kynureninase family. Homodimer. Pyridoxal 5'-phosphate serves as cofactor.

The enzyme catalyses L-kynurenine + H2O = anthranilate + L-alanine + H(+). It catalyses the reaction 3-hydroxy-L-kynurenine + H2O = 3-hydroxyanthranilate + L-alanine + H(+). It functions in the pathway amino-acid degradation; L-kynurenine degradation; L-alanine and anthranilate from L-kynurenine: step 1/1. The protein operates within cofactor biosynthesis; NAD(+) biosynthesis; quinolinate from L-kynurenine: step 2/3. Its function is as follows. Catalyzes the cleavage of L-kynurenine (L-Kyn) and L-3-hydroxykynurenine (L-3OHKyn) into anthranilic acid (AA) and 3-hydroxyanthranilic acid (3-OHAA), respectively. The chain is Kynureninase from Xanthomonas campestris pv. campestris (strain 8004).